A 154-amino-acid polypeptide reads, in one-letter code: Ribosome maturation factor RimP (154 aa).

It belongs to the RimP family.

The protein resides in the cytoplasm. Functionally, required for maturation of 30S ribosomal subunits. In Haemophilus ducreyi (strain 35000HP / ATCC 700724), this protein is Ribosome maturation factor RimP.